The sequence spans 196 residues: Adenylate kinase (196 aa).

10 to 15 (GAGKGT) serves as a coordination point for ATP. An NMP region spans residues 30–59 (STGDMLRAAVSAGTEIGKRAKAVMDAGGLV). Residues T31, R36, 57-59 (GLV), 85-88 (GYPR), and Q92 each bind AMP. The segment at 126–142 (NRVAETIAAGGTVRSDD) is LID. R127 lines the ATP pocket. AMP-binding residues include R139 and R150. An ATP-binding site is contributed by A178.

Belongs to the adenylate kinase family. Monomer.

The protein resides in the cytoplasm. It carries out the reaction AMP + ATP = 2 ADP. The protein operates within purine metabolism; AMP biosynthesis via salvage pathway; AMP from ADP: step 1/1. Its function is as follows. Catalyzes the reversible transfer of the terminal phosphate group between ATP and AMP. Plays an important role in cellular energy homeostasis and in adenine nucleotide metabolism. The protein is Adenylate kinase of Agrobacterium fabrum (strain C58 / ATCC 33970) (Agrobacterium tumefaciens (strain C58)).